Consider the following 119-residue polypeptide: uncharacterized protein (119 aa).

Residues 6–36 (QAYLDIQGKIAEFRREIKALRVEEKAITANL) adopt a coiled-coil conformation. The tract at residues 95–119 (AVTGSSSNVKIRKSAPARNEEDDDG) is disordered.

This is an uncharacterized protein from Frog virus 3 (isolate Goorha) (FV-3).